The primary structure comprises 222 residues: Leucyl/phenylalanyl-tRNA--protein transferase (222 aa).

It belongs to the L/F-transferase family.

Its subcellular location is the cytoplasm. It carries out the reaction N-terminal L-lysyl-[protein] + L-leucyl-tRNA(Leu) = N-terminal L-leucyl-L-lysyl-[protein] + tRNA(Leu) + H(+). The catalysed reaction is N-terminal L-arginyl-[protein] + L-leucyl-tRNA(Leu) = N-terminal L-leucyl-L-arginyl-[protein] + tRNA(Leu) + H(+). The enzyme catalyses L-phenylalanyl-tRNA(Phe) + an N-terminal L-alpha-aminoacyl-[protein] = an N-terminal L-phenylalanyl-L-alpha-aminoacyl-[protein] + tRNA(Phe). Its function is as follows. Functions in the N-end rule pathway of protein degradation where it conjugates Leu, Phe and, less efficiently, Met from aminoacyl-tRNAs to the N-termini of proteins containing an N-terminal arginine or lysine. This chain is Leucyl/phenylalanyl-tRNA--protein transferase, found in Legionella pneumophila (strain Corby).